The chain runs to 189 residues: Glutathione-dependent formaldehyde-activating enzyme (189 aa).

The CENP-V/GFA domain occupies 20 to 167; it reads FAGGTLVCKC…LKELGLEPYD (148 aa). Positions 27, 29, 48, 50, 53, 95, and 98 each coordinate Zn(2+).

This sequence belongs to the Gfa family. It depends on Zn(2+) as a cofactor.

It carries out the reaction S-(hydroxymethyl)glutathione = glutathione + formaldehyde. The protein operates within one-carbon metabolism; formaldehyde degradation; formate from formaldehyde (glutathione route): step 1/3. Catalyzes the condensation of formaldehyde and glutathione to S-hydroxymethylglutathione. This Rhodopseudomonas palustris (strain BisB18) protein is Glutathione-dependent formaldehyde-activating enzyme.